Here is an 88-residue protein sequence, read N- to C-terminus: Small ribosomal subunit protein uS15 (88 aa).

The protein belongs to the universal ribosomal protein uS15 family. In terms of assembly, part of the 30S ribosomal subunit. Forms a bridge to the 50S subunit in the 70S ribosome, contacting the 23S rRNA.

One of the primary rRNA binding proteins, it binds directly to 16S rRNA where it helps nucleate assembly of the platform of the 30S subunit by binding and bridging several RNA helices of the 16S rRNA. Functionally, forms an intersubunit bridge (bridge B4) with the 23S rRNA of the 50S subunit in the ribosome. The chain is Small ribosomal subunit protein uS15 from Borrelia turicatae (strain 91E135).